The chain runs to 306 residues: Probable C-terminal domain small phosphatase (306 aa).

Positions 1-36 are enriched in polar residues; the sequence is MNSSPITQVSNPNDSLNHSSTNLIPSSHNSLNNYPQ. Disordered stretches follow at residues 1 to 45 and 61 to 116; these read MNSS…NRKK and NDQN…NKDS. Residues 61–111 show a composition bias toward low complexity; it reads NDQNNGNNINTDNGASNNDKLQQQKQYNQQQQQQYNQHQQQQQQQQQQQQY. The FCP1 homology domain maps to 132–290; sequence RHVGLKTLVL…LDLLPLLDDL (159 aa). Aspartate 142 acts as the 4-aspartylphosphate intermediate in catalysis. Positions 142, 144, and 253 each coordinate Mg(2+). Catalysis depends on aspartate 144, which acts as the Proton donor.

Monomer. It depends on Mg(2+) as a cofactor.

It is found in the nucleus. The catalysed reaction is O-phospho-L-seryl-[protein] + H2O = L-seryl-[protein] + phosphate. It catalyses the reaction O-phospho-L-threonyl-[protein] + H2O = L-threonyl-[protein] + phosphate. In terms of biological role, may function as a phosphatase involved in the regulation of cell growth and differentiation. The chain is Probable C-terminal domain small phosphatase (fcpA) from Dictyostelium discoideum (Social amoeba).